A 556-amino-acid polypeptide reads, in one-letter code: Peptide chain release factor 3 (556 aa).

The tr-type G domain occupies 28 to 297; that stretch reads QQRRNFAIIS…AFLDYALKPG (270 aa). GTP-binding positions include 37-44, 105-109, and 159-162; these read SHPDAGKT, DTPGH, and NKMD.

It belongs to the TRAFAC class translation factor GTPase superfamily. Classic translation factor GTPase family. PrfC subfamily.

The protein localises to the cytoplasm. Functionally, increases the formation of ribosomal termination complexes and stimulates activities of RF-1 and RF-2. It binds guanine nucleotides and has strong preference for UGA stop codons. It may interact directly with the ribosome. The stimulation of RF-1 and RF-2 is significantly reduced by GTP and GDP, but not by GMP. The polypeptide is Peptide chain release factor 3 (Synechococcus sp. (strain ATCC 27144 / PCC 6301 / SAUG 1402/1) (Anacystis nidulans)).